A 507-amino-acid polypeptide reads, in one-letter code: UDP-glycosyltransferase 73D1 (507 aa).

UDP-alpha-D-glucose contacts are provided by residues serine 298, 359–361 (SPQ), 376–384 (HCGWNSTIE), and 398–401 (FAEQ).

This sequence belongs to the UDP-glycosyltransferase family.

The chain is UDP-glycosyltransferase 73D1 (UGT73D1) from Arabidopsis thaliana (Mouse-ear cress).